The chain runs to 396 residues: MAIRINTATFQSDLYRSFAFPQPKPLRSPKFAMASTIGSATTKVESTKKPFTPPREVHQQVLHSMPPQKIEIFKSMEGWAENNILVHLKPVEKCWQAQDFLPDPASDGFMEQVEELRARAKEIPDDYFVVLVGDMITEEALPTYQTMLNTLDGVRDETGATLLLGLVWTRAWTAEENRHGDLLHQYLYLSGRVDMRQIQKTIQYLIGSGMDPRTENSPYLGFIYTSFQERATFISHGNTARHAKEHGDVKLAQMCGIIAADEKRHETAYTKIVEKLFEIDPDGTVLAFADMMRKKISMPAHLMYDGRDDNLFENFSAVAQRLGVYTAKDYADILEFLVGRWKVADLTGLSGEGRKAQDYVCGLAPRIRRLEERNSARAKESVNVPFSWIFDREVKL.

The transit peptide at 1–33 (MAIRINTATFQSDLYRSFAFPQPKPLRSPKFAM) directs the protein to the chloroplast. Positions 138, 176, 179, 229, 262, and 265 each coordinate Fe cation.

It belongs to the fatty acid desaturase type 2 family. In terms of assembly, homodimer. It depends on Fe(2+) as a cofactor.

The protein localises to the plastid. The protein resides in the chloroplast. The enzyme catalyses octadecanoyl-[ACP] + 2 reduced [2Fe-2S]-[ferredoxin] + O2 + 2 H(+) = (9Z)-octadecenoyl-[ACP] + 2 oxidized [2Fe-2S]-[ferredoxin] + 2 H2O. The protein operates within lipid metabolism; fatty acid metabolism. Functionally, converts stearoyl-ACP to oleoyl-ACP by introduction of a cis double bond between carbons 9 and 10 of the acyl chain. This chain is Stearoyl-[acyl-carrier-protein] 9-desaturase, chloroplastic, found in Helianthus annuus (Common sunflower).